Reading from the N-terminus, the 257-residue chain is tRNA pseudouridine synthase A (257 aa).

The Nucleophile role is filled by Asp-53. Tyr-111 serves as a coordination point for substrate.

This sequence belongs to the tRNA pseudouridine synthase TruA family. In terms of assembly, homodimer.

It catalyses the reaction uridine(38/39/40) in tRNA = pseudouridine(38/39/40) in tRNA. Formation of pseudouridine at positions 38, 39 and 40 in the anticodon stem and loop of transfer RNAs. The sequence is that of tRNA pseudouridine synthase A from Xanthomonas oryzae pv. oryzae (strain MAFF 311018).